The sequence spans 369 residues: Maltose/maltodextrin import ATP-binding protein MalK (369 aa).

The 231-residue stretch at 4 to 234 (VTLRNVCKSY…PKNRFVAGFI (231 aa)) folds into the ABC transporter domain. 36-43 (GPSGCGKS) is an ATP binding site.

It belongs to the ABC transporter superfamily. Maltooligosaccharide importer (TC 3.A.1.1.1) family. In terms of assembly, the complex is composed of two ATP-binding proteins (MalK), two transmembrane proteins (MalG and MalK) and a solute-binding protein (MalE).

It is found in the cell inner membrane. It carries out the reaction D-maltose(out) + ATP + H2O = D-maltose(in) + ADP + phosphate + H(+). Functionally, part of the ABC transporter complex MalEFGK involved in maltose/maltodextrin import. Responsible for energy coupling to the transport system. The polypeptide is Maltose/maltodextrin import ATP-binding protein MalK (Aliivibrio fischeri (strain ATCC 700601 / ES114) (Vibrio fischeri)).